The sequence spans 329 residues: Strigolactones hydrolase CXE15 (329 aa).

Positions 83–85 (HGG) match the Involved in the stabilization of the negatively charged intermediate by the formation of the oxyanion hole motif. (-)-2'-epi-GR24 contacts are provided by G85, G86, S169, and S170. S169 (nucleophile) is an active-site residue. Residues E271 and H302 contribute to the active site.

The protein belongs to the 'GDXG' lipolytic enzyme family. As to expression, expressed in axillary buds, leaves, stems, hypocotyls, flowers, siliques, and vasculatures of shoots and roots.

Its subcellular location is the nucleus. It is found in the cytoplasm. The protein resides in the cytosol. It catalyses the reaction (-)-2'-epi-GR24 + H2O = (-)-2'-epi-GR24 ABC-rings + 5-hydroxy-3-methylfuran-2(5H)-one. The enzyme catalyses 5-deoxystrigol + H2O = 5-deoxystrigol ABC-rings + 5-hydroxy-3-methylfuran-2(5H)-one. It carries out the reaction orobanchol + H2O = orobanchol ABC-rings + 5-hydroxy-3-methylfuran-2(5H)-one. Functionally, binds to strigolactones (SLs) such as (-)-2'-epi-GR24(4DO), 5-deoxystrigol (5DS) and orobanchol, and catalyzes their hydrolysis; SL are phytohormones controlling shoot branching and communications between plants and microorganisms. Promotes shoot branching by dampening SL-inhibited axillary bud outgrowth. The sequence is that of Strigolactones hydrolase CXE15 from Arabidopsis thaliana (Mouse-ear cress).